The primary structure comprises 364 residues: Doublecortin domain-containing protein 2C (364 aa).

Doublecortin domains are found at residues 16–98 and 136–217; these read KTIV…LDYI and RHIN…FPYW. Residues 233–255 form a disordered region; that stretch reads VEKNSQRKKKVDSKGKEPCKYDG.

In terms of tissue distribution, expressed in testis and spermatozoa (at protein level).

Its subcellular location is the cell projection. It is found in the cilium. The protein resides in the flagellum. The protein localises to the cytoplasm. The sequence is that of Doublecortin domain-containing protein 2C from Homo sapiens (Human).